Reading from the N-terminus, the 504-residue chain is FAD-dependent monooxygenase nsrK (504 aa).

R146 contributes to the FAD binding site. The active site involves R227. 2 residues coordinate FAD: D340 and G353.

It belongs to the paxM FAD-dependent monooxygenase family. FAD is required as a cofactor.

Its pathway is secondary metabolite biosynthesis. FAD-dependent monooxygenase; part of the gene cluster that mediates the biosynthesis of the tetrahydroxanthone dimer neosartorin, which exhibits antibacterial activity. The two different monomeric units appear to be synthesized by the same set of enzymes, among which the Baeyer-Villiger monooxygenase nsrF is the key enzyme for the divergence of the biosynthetic routes. The pathway begins with the synthesis of atrochrysone thioester by the polyketide synthase nsrB. The atrochrysone carboxyl ACP thioesterase nsrC then breaks the thioester bond and releases the atrochrysone carboxylic acid from AacuL. Atrochrysone carboxylic acid is decarboxylated by the decarboxylase nsrE, and oxidized by the anthrone oxygenase nsrD to yield emodin. Emodin is then reduced to emodin hydroquinone by the oxidoreductase nsrR. A-ring reduction by the short chain dehydrogenase nsrJ, dehydration by the scytalone dehydratase-like protein nsrI and probable spontaneous re-oxidation, results in overall deoxygenation to chrysophanol. The Baeyer-Villiger monooxygenase nsrF accepts chrysophanol as a substrate to insert one oxygen atom at two different positions to yield the precursors of both monomric units. NsrF is promiscuous/flexible in interacting with the 2 (non methylated and methylated) aromatic rings of chrysophanol, thus diverging the biosynthetic pathway at this point. After the hydrolysis of the lactones, methylesterification by the methyltransferase nsrG yields respectively moniliphenone and 2,2',6'-trihydroxy-4-methyl-6-methoxya-cyldiphenylmethanone. The next steps are the hydroxylation by the FAD-dependent monooxygenase nsrK, followed by isomerization by the monooxygenase nsrQ. The short chain dehydrogenase/reductase nsrO then catalyzes the C-5 ketoreduction to give the xanthone skeleton of blennolide C and 5-acetylblennolide A. The acetyltransferase nsrL has a strict substrate specificity and uses only blennolide A but not blennolide C to yield 5-acetylblennolide A as the single-acetylated product. In the final step of the biosynthesis, the heterodimerization of the 2 xanthones, blennolide C and 5-acetylblennolide A, is catalyzed by the cytochrome P450 monooxygenase nsrP. NsrP can utilize at least three different xanthones as its substrates to perform the dimerization reaction. The sequence is that of FAD-dependent monooxygenase nsrK from Aspergillus novofumigatus (strain IBT 16806).